A 191-amino-acid polypeptide reads, in one-letter code: Large ribosomal subunit protein uL5 (191 aa).

This sequence belongs to the universal ribosomal protein uL5 family. As to quaternary structure, part of the 50S ribosomal subunit; part of the 5S rRNA/L5/L18/L25 subcomplex. Contacts the 5S rRNA and the P site tRNA. Forms a bridge to the 30S subunit in the 70S ribosome.

Its function is as follows. This is one of the proteins that bind and probably mediate the attachment of the 5S RNA into the large ribosomal subunit, where it forms part of the central protuberance. In the 70S ribosome it contacts protein S13 of the 30S subunit (bridge B1b), connecting the 2 subunits; this bridge is implicated in subunit movement. Contacts the P site tRNA; the 5S rRNA and some of its associated proteins might help stabilize positioning of ribosome-bound tRNAs. The protein is Large ribosomal subunit protein uL5 of Corynebacterium glutamicum (strain R).